We begin with the raw amino-acid sequence, 252 residues long: Chaperone protein AggD (252 aa).

Positions 1–22 are cleaved as a signal peptide; that stretch reads MKIRRIVSTIAIALSVFTFAHA.

The protein belongs to the periplasmic pilus chaperone family.

It localises to the periplasm. Functionally, involved in the biogenesis of the AAF/I fimbriae. The sequence is that of Chaperone protein AggD (aggD) from Escherichia coli.